A 1019-amino-acid polypeptide reads, in one-letter code: MKIHIIYQLKCRLIKAFKRIKSIHILIILFFSFVCWEILGFSTNILADFLWFQELNYLPVLINKLQTETWLWITTFLISMGFFLVNLRLASFFKYSKKQVRITERSEEIMLIPPVTIPSSKLRIEPSLSLSWLLCCIFGLILLVGLILTHYIDVFTNYLYPDLTVANVSPQIPSEFNIESICKILTSILSNLWLLGLFLLLSFAIIINPILWLSVFAVVLSLVFSFILSSHWANILQLLHGTPFNKSEDLFHIDISFYVFQLPVLELLRFWLIGLFLYGFVACILIYLLSGKSLSQGNFYQFSQQQEKHLHGLGGGFILTIAFSYFIACFELLYSRRGVVYGAGYTDIKVQLPAYVFLGILALLIAFFLFWQAIFSVKSIQSYIEASLWFLRLGRKRKRKKKVIAKLFANSYSLRAILTWYLIIAVIAGWLIPKIVQMAIVQPNEIEREIPYIKRSITFTKEAYIDVDKLEVELFDPNNELTYDDLINNKLIIENIRLWDTRPILQTNRQLQQIRPYYEFINADIDRYTFLKKESERTKNNLTKKQQVIIAARELNYESVPQPAQTWVNEHLVYTHGYGFTLSPINQVEKNGLPEYFVKNIGPDPTLEKNSTLEVLNRIRDSIPIGKPRIYYGELTNTNIMTSTAQRNKELDYPSGEANSYNTYDGSGGIVIGQGWQRWIFAKYLKDWKMLLTNEFIPETKLLYRRNINARVRSIAPFLRYDHDPYLVVADPNFGHKNMNQKNPNYLYWIIDAYTTTNHYPYSDPENNEFNYIRNSVKVVIDAYNGSVKFYVADPKDPIIRTWKKAFSDMFNSIEEMPTSLYTHIRYPLDLFQVQSEVLSTYHMDDPRVFYNREDLWRVPIEIYGAQQQKVKPYYLITQLPTETSEEFILLLPYTPASRNNLIAWLAARSDGENYGKLLLYQFPKQRLIYGIEQIEALINQDPEISQQISLWNRQGSKAIKGNLLVIPINESLIYVEPIYLEAEQNSLPTLRRVIVSYKNRVVMKPTLDEALQEVFQIQ.

9 helical membrane-spanning segments follow: residues 23-43 (IHIL…GFST), 67-87 (TETW…LVNL), 128-148 (LSLS…GLIL), 192-212 (LWLL…PILW), 213-233 (LSVF…SHWA), 270-290 (FWLI…YLLS), 313-333 (LGGG…FELL), 355-375 (YVFL…QAIF), and 416-436 (AILT…PKIV).

This sequence belongs to the UPF0182 family.

It localises to the cell membrane. The chain is UPF0182 protein Tery_0938 from Trichodesmium erythraeum (strain IMS101).